The primary structure comprises 108 residues: Integration host factor subunit alpha (108 aa).

It belongs to the bacterial histone-like protein family. In terms of assembly, heterodimer of an alpha and a beta chain.

Functionally, this protein is one of the two subunits of integration host factor, a specific DNA-binding protein that functions in genetic recombination as well as in transcriptional and translational control. The chain is Integration host factor subunit alpha from Methylorubrum populi (strain ATCC BAA-705 / NCIMB 13946 / BJ001) (Methylobacterium populi).